The primary structure comprises 364 residues: tRNA 2-selenouridine synthase (364 aa).

Residues 14 to 137 (LIADTPIIDV…LRQTAIQATI (124 aa)) form the Rhodanese domain. The active-site S-selanylcysteine intermediate is C97.

It belongs to the SelU family. Monomer.

It catalyses the reaction 5-methylaminomethyl-2-thiouridine(34) in tRNA + selenophosphate + (2E)-geranyl diphosphate + H2O + H(+) = 5-methylaminomethyl-2-selenouridine(34) in tRNA + (2E)-thiogeraniol + phosphate + diphosphate. The enzyme catalyses 5-methylaminomethyl-2-thiouridine(34) in tRNA + (2E)-geranyl diphosphate = 5-methylaminomethyl-S-(2E)-geranyl-thiouridine(34) in tRNA + diphosphate. It carries out the reaction 5-methylaminomethyl-S-(2E)-geranyl-thiouridine(34) in tRNA + selenophosphate + H(+) = 5-methylaminomethyl-2-(Se-phospho)selenouridine(34) in tRNA + (2E)-thiogeraniol. The catalysed reaction is 5-methylaminomethyl-2-(Se-phospho)selenouridine(34) in tRNA + H2O = 5-methylaminomethyl-2-selenouridine(34) in tRNA + phosphate. Its function is as follows. Involved in the post-transcriptional modification of the uridine at the wobble position (U34) of tRNA(Lys), tRNA(Glu) and tRNA(Gln). Catalyzes the conversion of 2-thiouridine (S2U-RNA) to 2-selenouridine (Se2U-RNA). Acts in a two-step process involving geranylation of 2-thiouridine (S2U) to S-geranyl-2-thiouridine (geS2U) and subsequent selenation of the latter derivative to 2-selenouridine (Se2U) in the tRNA chain. This is tRNA 2-selenouridine synthase from Escherichia coli O127:H6 (strain E2348/69 / EPEC).